Here is a 518-residue protein sequence, read N- to C-terminus: Protein PAC2 (518 aa).

The region spanning 23–67 (VIKPWPSVKAYGVEWDDHSRGKHSGTIDDIHYFDVQIPNSGSFLK) is the CAP-Gly domain. LRR repeat units follow at residues 153–174 (NVKD…CEFI), 179–201 (NLES…KEYD), 204–227 (HIKT…LKSF), 229–252 (TLKM…ENEI), 255–276 (TLEE…PKNL), 277–298 (TLKG…AIYS), 299–319 (VESL…DDLN), and 324–345 (SLKN…INVE).

The protein resides in the cytoplasm. It localises to the cytoskeleton. Required for viability in the absence of the kinesin-related CIN8 mitotic motor. Seems to be involved in the assembly of alpha-tubulin. The protein is Protein PAC2 (PAC2) of Saccharomyces cerevisiae (strain ATCC 204508 / S288c) (Baker's yeast).